The following is an 873-amino-acid chain: Protein translocase subunit SecA (873 aa).

ATP is bound by residues Q85, 103–107 (GEGKT), and D492. Residues 835-856 (RYAEEEGKQPIRKENQIGRNDD) show a composition bias toward basic and acidic residues. The segment at 835 to 873 (RYAEEEGKQPIRKENQIGRNDDCPCGSGKKYKKCCGKNA) is disordered. The Zn(2+) site is built by C857, C859, C868, and C869. Over residues 863–873 (KKYKKCCGKNA) the composition is skewed to basic residues.

Belongs to the SecA family. As to quaternary structure, monomer and homodimer. Part of the essential Sec protein translocation apparatus which comprises SecA, SecYEG and auxiliary proteins SecDF. Other proteins may also be involved. It depends on Zn(2+) as a cofactor.

The protein localises to the cell membrane. The protein resides in the cytoplasm. It carries out the reaction ATP + H2O + cellular proteinSide 1 = ADP + phosphate + cellular proteinSide 2.. In terms of biological role, part of the Sec protein translocase complex. Interacts with the SecYEG preprotein conducting channel. Has a central role in coupling the hydrolysis of ATP to the transfer of proteins into and across the cell membrane, serving as an ATP-driven molecular motor driving the stepwise translocation of polypeptide chains across the membrane. In Desulforamulus reducens (strain ATCC BAA-1160 / DSM 100696 / MI-1) (Desulfotomaculum reducens), this protein is Protein translocase subunit SecA.